The following is a 743-amino-acid chain: Merozoite surface protein 9 (743 aa).

The N-terminal stretch at 1 to 23 (MMNMKIVLFSLLLFVIRWNIISC) is a signal peptide. Residues 77–235 (KELLKEKQYT…VNDEDDVNDE (159 aa)) form an interaction with MSP1 and host SLC4A1/Band 3 region. Disordered regions lie at residues 202–282 (KSQG…ATAY), 459–487 (DNQA…PTED), 512–540 (NNTP…ENFD), and 666–743 (VDAL…EESK). A compositionally biased stretch (polar residues) spans 211–224 (SQNQNENNDNQKYQ). 8 consecutive repeat copies span residues 226 to 231 (VNDEDD), 232 to 237 (VNDEED), 238 to 243 (TNDDED), 244 to 249 (TNDEED), 250 to 255 (TNDDED), 256 to 261 (TNDDED), 262 to 267 (TNDEED), and 268 to 273 (TNDEED). Residues 226–273 (VNDEDDVNDEEDTNDDEDTNDEEDTNDDEDTNDDEDTNDEEDTNDEED) form an 8 X 6 AA tandem repeats of [VT]-N-D-[ED]-[ED]-D region. Over residues 226–274 (VNDEDDVNDEEDTNDDEDTNDEEDTNDDEDTNDDEDTNDEEDTNDEEDH) the composition is skewed to acidic residues. Positions 364 to 528 (LKDNLINYEF…PPTQSKKKNK (165 aa)) are interaction with MSP1 and host SLC4A1/Band 3. The span at 459–473 (DNQAVDTKSMEEPKV) shows a compositional bias: basic and acidic residues. Over residues 512–521 (NNTPNVVPPT) the composition is skewed to low complexity. Residues 644 to 732 (NQETEEEMEK…EEQEEEEEEI (89 aa)) are a coiled coil. Positions 672 to 722 (KNKEEEEKEKEKEKEKEEKEKEEKEKEEKEKEKEEKEKEKEEKEEEKKEKE) are enriched in basic and acidic residues. Acidic residues predominate over residues 723 to 733 (EEQEEEEEEIV).

Belongs to the plasmodium ABRA family. As to quaternary structure, forms a complex composed of MSP1, MSP6, MSP7, MSP9 and MSP3; within the complex, MSP6 and MSP9 mediate the binding to the host erythrocyte. Interacts with MSP1 subunits p19 and p42; the interaction is direct. Interacts with host SLC4A1/Band 3 protein (via the 5ABC region). MSP1 subunits p19 or p42, and MSP9 form a co-ligand complex that interacts with host SLC4A1/Band 3 protein. Post-translationally, not glycosylated.

It localises to the cell membrane. It is found in the parasitophorous vacuole lumen. Its subcellular location is the secreted. During the asexual blood stage, involved in the sialic acid-independent (SAID) merozoite invasion of host erythrocytes by binding to host SLC4A1/Band 3 protein on the surface of the host erythrocyte. This is Merozoite surface protein 9 from Plasmodium falciparum (isolate Camp / Malaysia).